A 353-amino-acid polypeptide reads, in one-letter code: Phospho-furanose lactonase (353 aa).

Zn(2+) contacts are provided by His-24, His-26, Lys-153, His-186, and His-214. Lys-153 carries the N6-carboxylysine modification. Residue 244-245 (KY) participates in substrate binding. Asp-272 contributes to the Zn(2+) binding site. A substrate-binding site is contributed by 275 to 278 (RILY).

This sequence belongs to the metallo-dependent hydrolases superfamily. Phosphotriesterase family. It depends on Zn(2+) as a cofactor.

The catalysed reaction is a 1,4-lactone + H2O = a 4-hydroxyacid + H(+). It carries out the reaction D-xylono-1,4-lactone 5-phosphate + H2O = 5-phospho-D-xylonate + H(+). It catalyses the reaction L-arabino-1,4-lactone 5-phosphate + H2O = 5-phospho-L-arabinonate + H(+). In terms of biological role, catalyzes the hydrolysis of D-xylono-1,4-lactone-5-phosphate and L-arabino-1,4-lactone-5-phosphate. Also able to hydrolyze carboxy 1,4-lactones. The chain is Phospho-furanose lactonase from Mycoplasmopsis synoviae (strain 53) (Mycoplasma synoviae).